We begin with the raw amino-acid sequence, 253 residues long: Imidazole glycerol phosphate synthase subunit HisF (253 aa).

Active-site residues include Asp-11 and Asp-130.

The protein belongs to the HisA/HisF family. Heterodimer of HisH and HisF.

It localises to the cytoplasm. The enzyme catalyses 5-[(5-phospho-1-deoxy-D-ribulos-1-ylimino)methylamino]-1-(5-phospho-beta-D-ribosyl)imidazole-4-carboxamide + L-glutamine = D-erythro-1-(imidazol-4-yl)glycerol 3-phosphate + 5-amino-1-(5-phospho-beta-D-ribosyl)imidazole-4-carboxamide + L-glutamate + H(+). Its pathway is amino-acid biosynthesis; L-histidine biosynthesis; L-histidine from 5-phospho-alpha-D-ribose 1-diphosphate: step 5/9. Functionally, IGPS catalyzes the conversion of PRFAR and glutamine to IGP, AICAR and glutamate. The HisF subunit catalyzes the cyclization activity that produces IGP and AICAR from PRFAR using the ammonia provided by the HisH subunit. In Thermoanaerobacter sp. (strain X514), this protein is Imidazole glycerol phosphate synthase subunit HisF.